Here is a 506-residue protein sequence, read N- to C-terminus: ATP synthase subunit alpha, mitochondrial (506 aa).

171–178 contacts ATP; sequence GDRQTGKT.

Belongs to the ATPase alpha/beta chains family. F-type ATPases have 2 components, CF(1) - the catalytic core - and CF(0) - the membrane proton channel. CF(1) has five subunits: alpha(3), beta(3), gamma(1), delta(1), epsilon(1). CF(0) has three main subunits: a, b and c.

It is found in the mitochondrion. It localises to the mitochondrion inner membrane. Its function is as follows. Mitochondrial membrane ATP synthase (F(1)F(0) ATP synthase or Complex V) produces ATP from ADP in the presence of a proton gradient across the membrane which is generated by electron transport complexes of the respiratory chain. F-type ATPases consist of two structural domains, F(1) - containing the extramembraneous catalytic core, and F(0) - containing the membrane proton channel, linked together by a central stalk and a peripheral stalk. During catalysis, ATP synthesis in the catalytic domain of F(1) is coupled via a rotary mechanism of the central stalk subunits to proton translocation. Subunits alpha and beta form the catalytic core in F(1). Rotation of the central stalk against the surrounding alpha(3)beta(3) subunits leads to hydrolysis of ATP in three separate catalytic sites on the beta subunits. Subunit alpha does not bear the catalytic high-affinity ATP-binding sites. This Beta vulgaris (Sugar beet) protein is ATP synthase subunit alpha, mitochondrial (ATPA).